The sequence spans 146 residues: Urease accessory protein UreE 1 (146 aa).

The protein belongs to the UreE family.

Its subcellular location is the cytoplasm. In terms of biological role, involved in urease metallocenter assembly. Binds nickel. Probably functions as a nickel donor during metallocenter assembly. The chain is Urease accessory protein UreE 1 from Pseudomonas syringae pv. tomato (strain ATCC BAA-871 / DC3000).